A 463-amino-acid chain; its full sequence is Putative WAS protein family homolog 3 (463 aa).

The required for WASH complex assembly stretch occupies residues 1–54 (MTPVRMQHSLAGQTYAVPLIQPDLRREEAVQQMADALQYLQKVSGDIFSRISQQ). The segment at 1 to 165 (MTPVRMQHSL…EGLGGLPSNI (165 aa)) is WHD1. Lys218 is covalently cross-linked (Glycyl lysine isopeptide (Lys-Gly) (interchain with G-Cter in ubiquitin)). A disordered region spans residues 295-463 (QDGVLTPPPP…AEEDEDDWES (169 aa)). Residues 300–312 (TPPPPPPPPPPAP) are compositionally biased toward pro residues. Residues 347–463 (QGAPREVVDP…AEEDEDDWES (117 aa)) are VCA. A WH2 domain is found at 359 to 381 (GRATLLESIRQAGGIGKAKLRSM). Residues 380 to 396 (SMKERKLEKKQQKEQEQ) are compositionally biased toward basic and acidic residues. Residues 422–434 (SGKGPGAGEGPGG) are compositionally biased toward gly residues. Over residues 454–463 (AEEDEDDWES) the composition is skewed to acidic residues.

Belongs to the WASH1 family. Component of the WASH core complex also described as WASH regulatory complex (SHRC) composed of WASH (WASHC1, WASH2P or WASH3P), WASHC2 (WASHC2A or WASHC2C), WASHC3, WASHC4 and WASHC5. The WASH core complex associates with the F-actin-capping protein dimer (formed by CAPZA1, CAPZA2 or CAPZA3 and CAPZB) in a transient or substoichiometric manner which was initially described as WASH complex. Interacts (via WHD1 region) with WASHC2C; the interaction is direct. Interacts with alpha-tubulin. Interacts with BECN1; WASHC1 and AMBRA1 can competitively interact with BECN1. Interacts with BLOC1S2; may associate with the BLOC-1 complex. Interacts with tubulin gamma chain (TUBG1 or TUBG2). Interacts with EXOC1, EXOC4, EXOC8; in MMP14-positive endosomes in breast tumor cells; indicative for an association with the exocyst complex.

It localises to the early endosome. The protein resides in the early endosome membrane. It is found in the recycling endosome membrane. The protein localises to the cell projection. Its subcellular location is the lamellipodium. It localises to the filopodium. The protein resides in the cytoplasmic vesicle. It is found in the autophagosome. The protein localises to the cytoplasm. Its subcellular location is the cytoskeleton. It localises to the microtubule organizing center. The protein resides in the centrosome. It is found in the centriole. Its function is as follows. Acts as a nucleation-promoting factor at the surface of endosomes, where it recruits and activates the Arp2/3 complex to induce actin polymerization, playing a key role in the fission of tubules that serve as transport intermediates during endosome sorting. Involved in endocytic trafficking of EGF. Involved in transferrin receptor recycling. Regulates the trafficking of endosomal alpha5beta1 integrin to the plasma membrane and involved in invasive cell migration. In T-cells involved in endosome-to-membrane recycling of receptors including T-cell receptor (TCR), CD28 and ITGAL; proposed to be implicated in T cell proliferation and effector function. In dendritic cells involved in endosome-to-membrane recycling of major histocompatibility complex (MHC) class II probably involving retromer and subsequently allowing antigen sampling, loading and presentation during T-cell activation. Involved in Arp2/3 complex-dependent actin assembly driving Salmonella typhimurium invasion independent of ruffling. Involved in the exocytosis of MMP14 leading to matrix remodeling during invasive migration and implicating late endosome-to-plasma membrane tubular connections and cooperation with the exocyst complex. Involved in negative regulation of autophagy independently from its role in endosomal sorting by inhibiting BECN1 ubiquitination to inactivate PIK3C3/Vps34 activity. The polypeptide is Putative WAS protein family homolog 3 (WASH3P) (Homo sapiens (Human)).